The sequence spans 241 residues: uncharacterized protein (241 aa).

One can recognise a Cupin type-2 domain in the interval 22 to 78; sequence SHKHAYSQFLFPLEGSIDLETEGRQVKLNPDHFLYIPPQCEHRFRSIGRNECLVLDV. The region spanning 137–235 is the HTH araC/xylS-type domain; that stretch reads YASIAYIHSH…GMPPRLYRNT (99 aa). 2 DNA-binding regions (H-T-H motif) span residues 154–175 and 202–225; these read KKLA…KKQT and LTVV…TKST.

This is an uncharacterized protein from Bacillus subtilis (strain 168).